Here is a 390-residue protein sequence, read N- to C-terminus: Phosphopentomutase (390 aa).

The Mn(2+) site is built by aspartate 11, aspartate 283, histidine 288, aspartate 324, histidine 325, and histidine 336.

The protein belongs to the phosphopentomutase family. Mn(2+) is required as a cofactor.

The protein localises to the cytoplasm. It carries out the reaction 2-deoxy-alpha-D-ribose 1-phosphate = 2-deoxy-D-ribose 5-phosphate. The enzyme catalyses alpha-D-ribose 1-phosphate = D-ribose 5-phosphate. Its pathway is carbohydrate degradation; 2-deoxy-D-ribose 1-phosphate degradation; D-glyceraldehyde 3-phosphate and acetaldehyde from 2-deoxy-alpha-D-ribose 1-phosphate: step 1/2. Isomerase that catalyzes the conversion of deoxy-ribose 1-phosphate (dRib-1-P) and ribose 1-phosphate (Rib-1-P) to deoxy-ribose 5-phosphate (dRib-5-P) and ribose 5-phosphate (Rib-5-P), respectively. This chain is Phosphopentomutase, found in Alkaliphilus oremlandii (strain OhILAs) (Clostridium oremlandii (strain OhILAs)).